Consider the following 115-residue polypeptide: NADH-ubiquinone oxidoreductase chain 3 (115 aa).

Transmembrane regions (helical) follow at residues 3–23, 55–75, and 87–107; these read LFIMLTMSSITVSIVVALNLL, FFMVGILFLLFDLEIAILLPL, and TITWAIIIFLFLFIGLAYEWL.

This sequence belongs to the complex I subunit 3 family.

It localises to the mitochondrion membrane. It catalyses the reaction a ubiquinone + NADH + 5 H(+)(in) = a ubiquinol + NAD(+) + 4 H(+)(out). Its function is as follows. Core subunit of the mitochondrial membrane respiratory chain NADH dehydrogenase (Complex I) that is believed to belong to the minimal assembly required for catalysis. Complex I functions in the transfer of electrons from NADH to the respiratory chain. The immediate electron acceptor for the enzyme is believed to be ubiquinone. The sequence is that of NADH-ubiquinone oxidoreductase chain 3 (MT-ND3) from Alligator mississippiensis (American alligator).